We begin with the raw amino-acid sequence, 127 residues long: Small ribosomal subunit protein uS11 (127 aa).

This sequence belongs to the universal ribosomal protein uS11 family. As to quaternary structure, part of the 30S ribosomal subunit. Interacts with proteins S7 and S18. Binds to IF-3.

Functionally, located on the platform of the 30S subunit, it bridges several disparate RNA helices of the 16S rRNA. Forms part of the Shine-Dalgarno cleft in the 70S ribosome. This is Small ribosomal subunit protein uS11 from Chlorobium limicola (strain DSM 245 / NBRC 103803 / 6330).